Reading from the N-terminus, the 428-residue chain is MTLMEDAKKGIVTPSIETVAKTEGIDPETVCSCVAKGLIAIPVNNRRETLPIGIGKYMSTKINANVGTSRDYVDIDAEIKKAKAAEAFGAHAVMDLSTGGNLDEIRTRILKSVNIPVGTVPIYQAAASRKVVVEMTSDDMFNAVRKHAEQGVDFVTVHAGVNLNSLERLRQSDRIMNVVSRGGSFTLAWMLHNGEDNPFYAEFDYLLEIAKEYDMTLSLGDGMRPGCIADASDRPKFMEFITLGELVKRARAANVQTFVEGPGHVPLNEIELSVRGMKELCNGAPLYLLGPLVTDIAPGFDHITGAIGGAVAGMHGTDFLCMVTPSEHLALPTLEDIKEGLLVTKVAAHTIDLIKEGPRERAWEKDLAMAYARRDLDWEKQFELAIDGNRARKIRDARKTESDTCSMCGELCALKIVKEAFEKKNSEE.

Substrate is bound by residues Asn-65, Met-94, Tyr-123, His-158, 180–182 (SRG), 221–224 (DGMR), and Glu-260. His-264 lines the Zn(2+) pocket. Tyr-287 is a substrate binding site. Zn(2+) is bound at residue His-328. Residues Cys-405, Cys-408, and Cys-412 each coordinate [4Fe-4S] cluster.

It belongs to the ThiC family. It depends on [4Fe-4S] cluster as a cofactor.

The enzyme catalyses 5-amino-1-(5-phospho-beta-D-ribosyl)imidazole + S-adenosyl-L-methionine = 4-amino-2-methyl-5-(phosphooxymethyl)pyrimidine + CO + 5'-deoxyadenosine + formate + L-methionine + 3 H(+). It functions in the pathway cofactor biosynthesis; thiamine diphosphate biosynthesis. Catalyzes the synthesis of the hydroxymethylpyrimidine phosphate (HMP-P) moiety of thiamine from aminoimidazole ribotide (AIR) in a radical S-adenosyl-L-methionine (SAM)-dependent reaction. The sequence is that of Phosphomethylpyrimidine synthase 2 from Methanosarcina barkeri (strain Fusaro / DSM 804).